Consider the following 244-residue polypeptide: Small ribosomal subunit protein uS3 (244 aa).

In terms of domain architecture, KH type-2 spans 39–107 (IRELIKKESF…KLIINVEEIK (69 aa)). The interval 216–244 (LPVYKNKKNDKNKKRRNNNRKGKSQAAKN) is disordered. Positions 220–238 (KNKKNDKNKKRRNNNRKGK) are enriched in basic residues.

This sequence belongs to the universal ribosomal protein uS3 family. As to quaternary structure, part of the 30S ribosomal subunit. Forms a tight complex with proteins S10 and S14.

In terms of biological role, binds the lower part of the 30S subunit head. Binds mRNA in the 70S ribosome, positioning it for translation. The protein is Small ribosomal subunit protein uS3 of Finegoldia magna (strain ATCC 29328 / DSM 20472 / WAL 2508) (Peptostreptococcus magnus).